The sequence spans 742 residues: Polyribonucleotide nucleotidyltransferase (742 aa).

Mg(2+)-binding residues include Asp515 and Asp521. A KH domain is found at 581-640; sequence PRIITITIPVDKIGEVIGPKGKIINQIQDDTGASISIEDDGTIYIGATNGEAAEAAKNAV. The region spanning 652-724 is the S1 motif domain; the sequence is GERYLGTVVK…DRGKLSLVPV (73 aa).

It belongs to the polyribonucleotide nucleotidyltransferase family. The cofactor is Mg(2+).

Its subcellular location is the cytoplasm. It carries out the reaction RNA(n+1) + phosphate = RNA(n) + a ribonucleoside 5'-diphosphate. Its function is as follows. Involved in mRNA degradation. Catalyzes the phosphorolysis of single-stranded polyribonucleotides processively in the 3'- to 5'-direction. The sequence is that of Polyribonucleotide nucleotidyltransferase from Nocardioides sp. (strain ATCC BAA-499 / JS614).